The primary structure comprises 374 residues: Nuclear hormone receptor family member nhr-57 (374 aa).

A DNA-binding region (nuclear receptor) is located at residues 7–84 (RKYCSVCHQL…VGMNPEVVQA (78 aa)). 2 NR C4-type zinc fingers span residues 10–30 (CSVCHQLGDGYHFGAIACKAC) and 48–67 (CRKKNECVIKMSSRDSCKSC). The NR LBD domain occupies 124–374 (QMTPTLCGVM…DKIYKIIDGQ (251 aa)).

The protein belongs to the nuclear hormone receptor family.

The protein resides in the nucleus. In terms of biological role, orphan nuclear receptor. This Caenorhabditis elegans protein is Nuclear hormone receptor family member nhr-57 (nhr-57).